A 102-amino-acid chain; its full sequence is Thioredoxin (102 aa).

Residues 2 to 102 form the Thioredoxin domain; that stretch reads VTEIRSLKQL…KTKIIDLFNN (101 aa). C30 and C33 are joined by a disulfide.

It belongs to the thioredoxin family.

Its function is as follows. Participates in various redox reactions through the reversible oxidation of its active center dithiol to a disulfide and catalyzes dithiol-disulfide exchange reactions. The chain is Thioredoxin (trxA) from Mycoplasma genitalium (strain ATCC 33530 / DSM 19775 / NCTC 10195 / G37) (Mycoplasmoides genitalium).